The chain runs to 102 residues: Large ribosomal subunit protein bL21 (102 aa).

The protein belongs to the bacterial ribosomal protein bL21 family. Part of the 50S ribosomal subunit. Contacts protein L20.

Functionally, this protein binds to 23S rRNA in the presence of protein L20. The polypeptide is Large ribosomal subunit protein bL21 (Photorhabdus laumondii subsp. laumondii (strain DSM 15139 / CIP 105565 / TT01) (Photorhabdus luminescens subsp. laumondii)).